Here is a 250-residue protein sequence, read N- to C-terminus: Proteasome subunit alpha type-7 (250 aa).

The protein belongs to the peptidase T1A family. The 26S proteasome consists of a 20S proteasome core and two 19S regulatory subunits. The 20S proteasome core is composed of 28 subunits that are arranged in four stacked rings, resulting in a barrel-shaped structure. The two end rings are each formed by seven alpha subunits, and the two central rings are each formed by seven beta subunits. The catalytic chamber with the active sites is on the inside of the barrel.

It localises to the cytoplasm. It is found in the nucleus. In terms of biological role, the proteasome is a multicatalytic proteinase complex which is characterized by its ability to cleave peptides with Arg, Phe, Tyr, Leu, and Glu adjacent to the leaving group at neutral or slightly basic pH. The proteasome has an ATP-dependent proteolytic activity. In Dictyostelium discoideum (Social amoeba), this protein is Proteasome subunit alpha type-7 (psmA7).